The primary structure comprises 283 residues: Zip homologous protein 4 (283 aa).

An RING-type zinc finger spans residues 6–50 (CFRCYKFPSKQIEFYLTNCMHMFCIECERLCHPPEEEPLKCIQCS). Disordered stretches follow at residues 149–175 (KKQL…SSRS) and 201–283 (TKAQ…RNSQ). Residues 163-175 (PRSNSLKVASSRS) show a composition bias toward polar residues. The span at 202–216 (KAQAKAEAEAEAPAK) shows a compositional bias: low complexity. Positions 220–235 (SKAQTTKCTSNYQSHP) are enriched in polar residues. Positions 267–283 (KKHEAQREKHKEHRNSQ) are enriched in basic and acidic residues.

Interacts with zhp-3; the interaction is required for their localization along paired chromosomes and stability, and for the formation of chiasma during meiotic recombination. Expressed in the germline.

It is found in the chromosome. Functionally, recruited co-dependently with zhp-3 to the synaptonemal complex between homologous chromosome pairs to regulate the formation and number of crossover events between homologs during meiotic recombination. In the early stages of pachytene, in complex with zhp-4, recruited by the zhp-1-zhp-2 heterodimer to designated crossover sites along the recombination intermediate to stabilize other pro-crossover factors such as rmh-1, msh-5 and cosa-1. This in turn facilitates crossover and promotes the formation of chiasma in each meiotic nucleus at the late pachytene stage of meiosis. Negatively regulates double strand break formation to promote formation of the crossover intermediate. The chain is Zip homologous protein 4 from Caenorhabditis elegans.